A 212-amino-acid polypeptide reads, in one-letter code: MAKNYYEITLALAGICQSAHLVQQLAHTGNCNNDVLHTSLNSVLNLNPASTLAVYGNDEQNLKVGLETLLGILNTSSNKGAGAELSRYTFSLIALERKLNAKSAALDELGKRIGQLERQLEHFELLSETIVSALAAIYVDVISTLGPRIQVTGSPEVLKNSQVQAKVRAALLAGIRSTVLWQQIGGGRLQLMFSRSQLVKEAKQILARCPSV.

Residues 92–128 (LIALERKLNAKSAALDELGKRIGQLERQLEHFELLSE) adopt a coiled-coil conformation.

This sequence belongs to the HflD family.

It is found in the cytoplasm. The protein resides in the cell inner membrane. The sequence is that of High frequency lysogenization protein HflD homolog from Pectobacterium atrosepticum (strain SCRI 1043 / ATCC BAA-672) (Erwinia carotovora subsp. atroseptica).